Consider the following 123-residue polypeptide: UPF0102 protein CLK_1817 (123 aa).

The protein belongs to the UPF0102 family.

This is UPF0102 protein CLK_1817 from Clostridium botulinum (strain Loch Maree / Type A3).